The following is a 339-amino-acid chain: Heat-inducible transcription repressor HrcA (339 aa).

The protein belongs to the HrcA family.

In terms of biological role, negative regulator of class I heat shock genes (grpE-dnaK-dnaJ and groELS operons). Prevents heat-shock induction of these operons. The polypeptide is Heat-inducible transcription repressor HrcA (Paraburkholderia phymatum (strain DSM 17167 / CIP 108236 / LMG 21445 / STM815) (Burkholderia phymatum)).